The primary structure comprises 252 residues: Protein UL24 homolog (252 aa).

The segment at 215–252 (SVLTKTSGENRSRASRQVAKNAPKNRIRRTAKKDAKRQ) is disordered. Positions 237 to 252 (PKNRIRRTAKKDAKRQ) are enriched in basic residues.

Belongs to the herpesviridae UL24 family.

Its subcellular location is the virion. It localises to the host cytoplasm. The protein resides in the host nucleus. It is found in the host nucleolus. The protein localises to the host Golgi apparatus. Its function is as follows. May participate in nuclear egress of viral particles. Plays a role in the dispersal of several host nucleolar proteins including NCL/nucleolin and NPM1. Since deletion of host NCL/nucleolin negatively impact on nuclear egress, UL24 supposedly acts on this process through its effect on host nucleoli. In Homo sapiens (Human), this protein is Protein UL24 homolog (U49).